Consider the following 174-residue polypeptide: MAQDIKNEEVEEVQEEEVVETAEETTPEKSELDLANERADEFENKYLRAHAEMQNIQRRANEERQNLQRYRSQDLAKAILPSLDNLERALAVEGLTDDVKKGLAMVQESLIHALKEEGIEEIAADGEFDHNYHMAIQTLPGDDEHPVDTIAQVFQKGYKLHDRILRPAMVVVYN.

The disordered stretch occupies residues 1-35; the sequence is MAQDIKNEEVEEVQEEEVVETAEETTPEKSELDLA. Acidic residues predominate over residues 9 to 25; sequence EVEEVQEEEVVETAEET. Residues 26–35 show a composition bias toward basic and acidic residues; it reads TPEKSELDLA.

It belongs to the GrpE family. Homodimer.

Its subcellular location is the cytoplasm. In terms of biological role, participates actively in the response to hyperosmotic and heat shock by preventing the aggregation of stress-denatured proteins, in association with DnaK and GrpE. It is the nucleotide exchange factor for DnaK and may function as a thermosensor. Unfolded proteins bind initially to DnaJ; upon interaction with the DnaJ-bound protein, DnaK hydrolyzes its bound ATP, resulting in the formation of a stable complex. GrpE releases ADP from DnaK; ATP binding to DnaK triggers the release of the substrate protein, thus completing the reaction cycle. Several rounds of ATP-dependent interactions between DnaJ, DnaK and GrpE are required for fully efficient folding. The chain is Protein GrpE from Streptococcus pneumoniae (strain ATCC BAA-255 / R6).